The following is a 90-amino-acid chain: Small ribosomal subunit protein bS20 (90 aa).

The protein belongs to the bacterial ribosomal protein bS20 family.

In terms of biological role, binds directly to 16S ribosomal RNA. In Desulfitobacterium hafniense (strain DSM 10664 / DCB-2), this protein is Small ribosomal subunit protein bS20.